Reading from the N-terminus, the 374-residue chain is Nudix hydrolase 20, chloroplastic (374 aa).

A chloroplast-targeting transit peptide spans 1–49 (MASGFCSLALTVTTSLFSSHAITRRVLPILRWRSSSMSLSPLRHSRALS). The 142-residue stretch at 205-346 (GYGVHMNGYV…KANCSLVIID (142 aa)) folds into the Nudix hydrolase domain. Residues 244–265 (GGLPHGISCGGNLVKECEEEAG) carry the Nudix box motif. The Mg(2+) site is built by Glu259 and Glu263.

It belongs to the Nudix hydrolase family. It depends on Mg(2+) as a cofactor. Mn(2+) is required as a cofactor. Expressed in leaves and inflorescences.

The protein resides in the plastid. It localises to the chloroplast. Functionally, probably mediates the hydrolysis of some nucleoside diphosphate derivatives. The chain is Nudix hydrolase 20, chloroplastic (NUDT20) from Arabidopsis thaliana (Mouse-ear cress).